The primary structure comprises 218 residues: tRNA (guanine-N(7)-)-methyltransferase (218 aa).

4 residues coordinate S-adenosyl-L-methionine: E46, E71, D98, and D120. Residue D120 is part of the active site. Residue K124 participates in substrate binding. Residues 126-131 (RHEKRR) form an interaction with RNA region. Residues D156 and 196-199 (TEYE) contribute to the substrate site.

Belongs to the class I-like SAM-binding methyltransferase superfamily. TrmB family.

It catalyses the reaction guanosine(46) in tRNA + S-adenosyl-L-methionine = N(7)-methylguanosine(46) in tRNA + S-adenosyl-L-homocysteine. The protein operates within tRNA modification; N(7)-methylguanine-tRNA biosynthesis. Catalyzes the formation of N(7)-methylguanine at position 46 (m7G46) in tRNA. This Lactobacillus johnsonii (strain CNCM I-12250 / La1 / NCC 533) protein is tRNA (guanine-N(7)-)-methyltransferase.